The primary structure comprises 284 residues: MEMO1 family protein MmarC6_1286 (284 aa).

Belongs to the MEMO1 family.

The polypeptide is MEMO1 family protein MmarC6_1286 (Methanococcus maripaludis (strain C6 / ATCC BAA-1332)).